Consider the following 224-residue polypeptide: Putative O-methyltransferase MMAR_4217 (224 aa).

Polar residues predominate over residues 1–11 (MHGTDSSSDTP). Residues 1-20 (MHGTDSSSDTPGQPAPSRAE) form a disordered region. Residues Val51, Glu73, 75–76 (GT), Ser81, Asp99, and Ile100 contribute to the S-adenosyl-L-methionine site. Asp147 provides a ligand contact to substrate. Asp149 contacts S-adenosyl-L-methionine.

The protein belongs to the class I-like SAM-binding methyltransferase superfamily. Cation-dependent O-methyltransferase family.

In Mycobacterium marinum (strain ATCC BAA-535 / M), this protein is Putative O-methyltransferase MMAR_4217.